Reading from the N-terminus, the 127-residue chain is Glycine cleavage system H protein 2 (127 aa).

Positions 24–105 (SVTVGISDHA…PYGSWIFKLK (82 aa)) constitute a Lipoyl-binding domain. An N6-lipoyllysine modification is found at K65.

It belongs to the GcvH family. The glycine cleavage system is composed of four proteins: P, T, L and H. Requires (R)-lipoate as cofactor.

In terms of biological role, the glycine cleavage system catalyzes the degradation of glycine. The H protein shuttles the methylamine group of glycine from the P protein to the T protein. This Pseudomonas putida (strain ATCC 47054 / DSM 6125 / CFBP 8728 / NCIMB 11950 / KT2440) protein is Glycine cleavage system H protein 2.